The chain runs to 361 residues: Uroporphyrinogen decarboxylase (361 aa).

Substrate-binding positions include 44-48 (RQAGR), aspartate 93, tyrosine 168, serine 223, and histidine 337.

This sequence belongs to the uroporphyrinogen decarboxylase family. As to quaternary structure, homodimer.

It is found in the cytoplasm. It carries out the reaction uroporphyrinogen III + 4 H(+) = coproporphyrinogen III + 4 CO2. Its pathway is porphyrin-containing compound metabolism; protoporphyrin-IX biosynthesis; coproporphyrinogen-III from 5-aminolevulinate: step 4/4. In terms of biological role, catalyzes the decarboxylation of four acetate groups of uroporphyrinogen-III to yield coproporphyrinogen-III. This is Uroporphyrinogen decarboxylase from Thermobifida fusca (strain YX).